Reading from the N-terminus, the 696-residue chain is Rho-related BTB domain-containing protein 1 (696 aa).

The interval 1-210 (MDADMDYERP…DNAIRAALIS (210 aa)) is rho-like. Residues 21-28 (GDNAVGKT), 84-88 (DTFGD), and 140-143 (CQLD) contribute to the GTP site. 2 BTB domains span residues 266-427 (ADVL…DEKE) and 485-552 (SDVT…SPNL). Positions 327–348 (VDPEEEREEGPPRIPQADQWKS) are disordered.

It belongs to the small GTPase superfamily. Rho family. In terms of tissue distribution, ubiquitous, with highest levels in skeletal muscle, placenta, testis, stomach, and kidney, followed by uterus and adrenal gland. Expressed in a variety of fetal tissues.

This chain is Rho-related BTB domain-containing protein 1 (RHOBTB1), found in Homo sapiens (Human).